The primary structure comprises 235 residues: MMIKLIVNADDFGLTEGTNYGIIDGHINGLVNSTTMMMNMPGTEHAVRLAKEYKTLGVGVHLVLTAGKPLLGDVPSLVSSDGLFHKQSVVWEGKVNPEEVEREWTAQIEKFLSYGLKPTHLDSHHHVHGLPILHDVLERLAATYNVPIRRCEEERAVRPFSDLFYSDFYADGVTEDYFVKLKERVQGEQTVEIMVHPAYIDPELVKRSSYVMDRVKELRILTESELPEGIELVKF.

Residues histidine 61 and histidine 124 each coordinate Mg(2+).

It belongs to the YdjC deacetylase family. The cofactor is Mg(2+).

Its function is as follows. Probably catalyzes the deacetylation of acetylated carbohydrates an important step in the degradation of oligosaccharides. This chain is Carbohydrate deacetylase, found in Bacillus cereus (strain 03BB102).